The sequence spans 152 residues: Transcriptional regulator MraZ (152 aa).

SpoVT-AbrB domains are found at residues 5–52 (ATTL…PLPE) and 81–124 (ADDC…NEDA).

It belongs to the MraZ family. As to quaternary structure, forms oligomers.

The protein localises to the cytoplasm. The protein resides in the nucleoid. The chain is Transcriptional regulator MraZ from Idiomarina loihiensis (strain ATCC BAA-735 / DSM 15497 / L2-TR).